The sequence spans 155 residues: Ribosome maturation factor RimP (155 aa).

Belongs to the RimP family.

It localises to the cytoplasm. Required for maturation of 30S ribosomal subunits. The sequence is that of Ribosome maturation factor RimP from Prochlorococcus marinus subsp. pastoris (strain CCMP1986 / NIES-2087 / MED4).